We begin with the raw amino-acid sequence, 2187 residues long: MPGEATETVPATEQELPQPQAETAVLPMSSALKVAAVGQPGPTPPSSLGPQQSPIVTAHQPSPLPSSVSSTPFEVPFAQPITAETALPSGTAPPTPTFLPHLIGPPISPAALALASPMIGLAQKGARSSSAPLSLVALAPHSVQKSSVCPPHPLTSPPSAAGAELGALTASIPPLEPKTSTSQVPSQGTLNLKGTAPCPPDVVRAFPSHLENPLASVQPGLMSCPQTLSNTSPVKGVPISSALTQSRLSLNLKGPVSPPARNTAAPSIPLAPSTSLGCHLPLLHHSSVDSPIQPPGQSGLAVSNPTSVGHSGIAASCPPERCVVPALPSRLLAVDSGAAPSDDKGSSAVTNELCSPPGSSNVAGTSLSPKASLVPKGSNVALQPLVTQVPASQKTGLKEIPVSCIGATHHALDNPSAISVAPATHVPPPTSSGLVSSKDPASPVTSLVVPAAHKQFPAPPASATLGVPVSPLPATEGLKNLPISALVNVGAPVSPAQAGLPTRKDTTLQPLAPIALKESPSSQSASSLEVLSEDTVTKKTTGGPAPVVRPAIAGVATTTSLRADSPPAVIRADSCVSPNTVSQPLKRSVTDPAMAPRTAKNTAPSTTSPLVPLASEGCPVASSMALSPQNASVSETALALSPEIPKSVPFPDPPLAEISFSNARKVDAVSHMESSGSSRQGHPDASVTAKGTVVCLADSSLDTSVSASKGSALSGASSPLYPLEVSFLPEAGLAVQGPKGSLNKLSPTPPSSKGAPVPSTGAPPSPKGAPIVPTESSISSKQVPAEILPSPQKTPEVTASRLISAVQSPKVDPIMSDVTPTSPKKTSATAVPKDTSATLSLKSVPAVTSLSPPKAPVAPSNEATIVPTEIPTSLKNALAAATPKETLATSIPKVTSPSPQKTPKSVSLKGAPAMTSKKATEIAASKDVSPSQFPKEVPLLPHVPPTSPPKSPVSDTLSGALTSPPPKGPPATLAETPTYPKKSPKPAASKKTPATPSPEGVTAVPLEIPPCSKKAPKTAAPKESSATSSSKRAPKTAVSKEIPSKGVTAVPLEISLPLKETSKSATPGEKSASSPKRSPKTAGPKETPPGGVTAVPPEISLPPKETPQNATPNESLAASSQKRSPKTSVPKETPPGGVTAMPLEIPSAPQKAPKTAVPKQIPTPEDAVTILAGSPLSPKKASKTAAPKEAPATPSVGVIAVSGEISPSPKKTSKTAAPKENSATLPPKRSPKTAAPKETPATSSEGVTAVPSEISPSPPTPASKGVPVTLTPKGAPNALAESPASPKKVPKTAAPEETSTTPSPQKIPKVAGPKEASATPPSKKTPKTAVPKETSAPSEGVTAVPLEIPPSPRKAPKTAAPKETPAPSPEGATTAPVQIPPSPRKGSKKAGSKETPTTPSPEGVTAAPLEIPISSKKTSKMASPKETLVTPSSKKLSQTVGPKETSLEGATAVPLEIPPSHKKAPKTVDPKQVPLTPSPKDAPTTLAESPSSPKKAPKTAAPPSERVTTVPPEKPATPQKASATTASKVPVPAETQEVAVSSRETPVTPAVPPVKNPSSHKKTSKTIELKEAPATLPPSPTKSPKIPSSKKAPRTSAPKEFPASPSIKPVTTSLAQTAPPSLQKAPSTTIPKENLAAPAVLPVSSKSPAAPAAASASLSPATAAPQTAPKEATTIPSCKKAAATETPIETSTAPSLEGAPKETSETSVSKVLMSSPPKKASSSKRASTLPATTLPSLKEASVLSPTATSSGKDSHISPVSDACSTGTTTPQASEKLPSKKGPTAFTEMLAAPAPESALAITAPIQKSPGANSNSASSPKCPDPSSKKDTKGLPSAVALAPQTVPVEKDTSKAIETLLVSPAKGSDCLHSPKGPVGSQVATPLAAFTSDKVPPEAVSASVAPKPAPAASLTLAPSPVAPLPPKQPLLESAPGSVLESPSKLPVPAEEDELPPLIPPEAVSGGEPFQPILVNMPAPKPAGTPAPAPSAKQPVLKNNKGSGTESDSDESVPELEEQDSTQTATQQAQLAAAAEIDEEPVSKAKQSRSEKKARKAMSKLGLRQVTGVTRVTIRKSKNILFVITKPDVYKSPASDTYIVFGEAKIEDLSQQAQLAAAEKFKVQGEAVSNIQENTQTPTVQEESEEEEVDETGVEVKDIELVMSQANVSRAKAVRALKNNSNDIVNAIMELTM.

3 disordered regions span residues Met1 to Gln20, Leu32 to Phe73, and Ile172 to Ala196. Residues Val9 to Gln20 are compositionally biased toward polar residues. The segment covering Lys178–Leu192 has biased composition (polar residues). Arg247 carries the post-translational modification Asymmetric dimethylarginine. 5 disordered regions span residues Asp335–Lys370, Asn579–Val611, Pro738–Thr835, Lys884–Lys1847, and Pro1892–Ser2053. The segment covering Ser347–Pro369 has biased composition (polar residues). The residue at position 590 (Thr590) is a Phosphothreonine. Polar residues-rich tracts occupy residues Ala599–Pro609, Val818–Thr835, and Leu887–Ser905. Ser822 carries the post-translational modification Phosphoserine. Pro residues predominate over residues Pro941–Ser951. Residues Thr976–Pro998 are compositionally biased toward low complexity. Over residues Thr1106 to Lys1122 the composition is skewed to polar residues. Ser1174 and Ser1177 each carry phosphoserine. The span at Ser1174–Ser1195 shows a compositional bias: low complexity. A Phosphothreonine modification is found at Thr1364. Phosphoserine occurs at positions 1368 and 1392. Thr1398 is modified (phosphothreonine). A phosphoserine mark is found at Ser1400 and Ser1423. The segment covering Val1429–Val1440 has biased composition (polar residues). The segment covering Ser1489–Ser1504 has biased composition (low complexity). Residue Ser1492 is modified to Phosphoserine. Over residues Pro1609–Pro1631 the composition is skewed to polar residues. Low complexity-rich tracts occupy residues Ala1636–Lys1670 and Ser1714–Ser1727. Polar residues predominate over residues Ala1762–Ala1772. 2 stretches are compositionally biased toward low complexity: residues Lys1806–Pro1823 and Pro1892–Ser1914. The PXLXP motif lies at Pro1950–Pro1954. A compositionally biased stretch (pro residues) spans Ala1973 to Ala1983. The segment covering Ser2001 to Asp2014 has biased composition (acidic residues). Residue Ser2015 is modified to Phosphoserine; by ILK1. Residues Thr2016–Ala2029 show a composition bias toward low complexity. The interval Gln2041–Met2052 is required for DNA-binding. In terms of domain architecture, NAC-A/B spans Ser2042–Ala2107. Ser2104 is modified (phosphoserine). Lys2114 carries the N6-acetyllysine; alternate modification. Lys2114 participates in a covalent cross-link: Glycyl lysine isopeptide (Lys-Gly) (interchain with G-Cter in SUMO2); alternate. Residue Thr2131 is modified to Phosphothreonine; by GSK3-beta. Position 2133 is a phosphothreonine (Thr2133). Phosphoserine occurs at positions 2138, 2158, 2163, and 2175. Residues Val2148 to Leu2185 enclose the UBA domain.

This sequence belongs to the NAC-alpha family. Interacts (via PXLXP motif) with the muscle-restricted histone methyltransferase SMYD1 (via MYND-type zinc finger). In terms of processing, phosphorylation of Ser-2015 by ILK during cell adhesion may promote nuclear localization. Phosphorylation of Thr-2131 by GSK3B may promote proteasome mediated degradation. Specifically expressed in heart and skeletal muscle: it is present in differentiated myotubes but not in myoblasts.

It is found in the cytoplasm. Its subcellular location is the nucleus. Cardiac- and muscle-specific transcription factor. May act to regulate the expression of genes involved in the development of myotubes. Plays a critical role in ventricular cardiomyocyte expansion and regulates postnatal skeletal muscle growth and regeneration. Involved in the organized assembly of thick and thin filaments of myofibril sarcomeres. In Mus musculus (Mouse), this protein is Nascent polypeptide-associated complex subunit alpha, muscle-specific form (Naca).